The primary structure comprises 538 residues: Calcium-dependent protein kinase 3 (538 aa).

Positions 23–70 are disordered; sequence PKKSIERIKKKKDSNKSIKSQHKFEGSKISNKNNELKDVKSKDPKNYE. Basic and acidic residues predominate over residues 56–68; that stretch reads NELKDVKSKDPKN. A Protein kinase domain is found at 112-367; it reads NLSEEPLGKG…ASEALKHPWF (256 aa). ATP contacts are provided by residues 118–126 and Lys-141; that span reads LGKGTYGCV. The active-site Proton acceptor is the Asp-232. Positions 387 to 395 match the J domain autoinhibitory motif motif; it reads NFKNYALLL. Residues 387–422 are j domain; sequence NFKNYALLLKLQKLAMTIIAQQSNDYDLQQLKAVFL. A J domain EF-hand interaction motif motif is present at residues 396–405; it reads KLQKLAMTII. EF-hand domains lie at 412 to 447, 450 to 481, and 482 to 517; these read YDLQ…SGLK, QNFD…DRKH, and LSKK…VILF. Ca(2+) contacts are provided by Asp-460, Asp-462, Ser-464, Arg-466, Glu-471, Asp-495, Asp-497, Asp-499, Glu-501, and Glu-506.

Belongs to the protein kinase superfamily. Ser/Thr protein kinase family. CDPK subfamily. Mg(2+) is required as a cofactor.

It localises to the cytoplasm. It carries out the reaction L-seryl-[protein] + ATP = O-phospho-L-seryl-[protein] + ADP + H(+). The catalysed reaction is L-threonyl-[protein] + ATP = O-phospho-L-threonyl-[protein] + ADP + H(+). With respect to regulation, activated by calcium. Upon calcium binding to the EF-hand domain 2, the C-terminus of the junction domain (J domain) undergoes a conformational change which results in the dissociation of the pseudo-substrate inhibitory motif from the catalytic domain. This, in turn, may facilitate the autophosphorylation of the activation loop at Thr-273, which leads to the kinase activation. Its function is as follows. Calcium-dependent protein kinase which acts as a sensor and effector of intracellular Ca(2+) levels probably in part downstream of cGMP-activated PKG kinase. In the mosquito midgut, regulates the gliding motility of the ookinete which is essential for the ookinete to invade the midgut epithelium. However, another study showed that while required for ookinete invasion of the midgut epithelium, is not required for ookinete gliding motility. The chain is Calcium-dependent protein kinase 3 from Plasmodium yoelii yoelii.